Consider the following 460-residue polypeptide: Bifunctional protein GlmU (460 aa).

The tract at residues 1–233 (MLDIVIMAAG…ETEVLGVNSP (233 aa)) is pyrophosphorylase. UDP-N-acetyl-alpha-D-glucosamine contacts are provided by residues lysine 21, glutamine 76, and 81–82 (GT). Aspartate 105 is a Mg(2+) binding site. UDP-N-acetyl-alpha-D-glucosamine contacts are provided by glycine 140, glutamate 158, and asparagine 231. Asparagine 231 lines the Mg(2+) pocket. The interval 234 to 254 (LQLADLERRLQRKQAEALLEA) is linker. An N-acetyltransferase region spans residues 255–460 (GVRLADPARF…AGWQRPQKKR (206 aa)). 2 residues coordinate UDP-N-acetyl-alpha-D-glucosamine: arginine 337 and lysine 355. Histidine 367 acts as the Proton acceptor in catalysis. The UDP-N-acetyl-alpha-D-glucosamine site is built by tyrosine 370 and asparagine 381. Residues alanine 384, 390-391 (NY), serine 409, glycine 427, and arginine 444 contribute to the acetyl-CoA site.

In the N-terminal section; belongs to the N-acetylglucosamine-1-phosphate uridyltransferase family. It in the C-terminal section; belongs to the transferase hexapeptide repeat family. Homotrimer. It depends on Mg(2+) as a cofactor.

The protein localises to the cytoplasm. It catalyses the reaction alpha-D-glucosamine 1-phosphate + acetyl-CoA = N-acetyl-alpha-D-glucosamine 1-phosphate + CoA + H(+). It carries out the reaction N-acetyl-alpha-D-glucosamine 1-phosphate + UTP + H(+) = UDP-N-acetyl-alpha-D-glucosamine + diphosphate. The protein operates within nucleotide-sugar biosynthesis; UDP-N-acetyl-alpha-D-glucosamine biosynthesis; N-acetyl-alpha-D-glucosamine 1-phosphate from alpha-D-glucosamine 6-phosphate (route II): step 2/2. It functions in the pathway nucleotide-sugar biosynthesis; UDP-N-acetyl-alpha-D-glucosamine biosynthesis; UDP-N-acetyl-alpha-D-glucosamine from N-acetyl-alpha-D-glucosamine 1-phosphate: step 1/1. It participates in bacterial outer membrane biogenesis; LPS lipid A biosynthesis. In terms of biological role, catalyzes the last two sequential reactions in the de novo biosynthetic pathway for UDP-N-acetylglucosamine (UDP-GlcNAc). The C-terminal domain catalyzes the transfer of acetyl group from acetyl coenzyme A to glucosamine-1-phosphate (GlcN-1-P) to produce N-acetylglucosamine-1-phosphate (GlcNAc-1-P), which is converted into UDP-GlcNAc by the transfer of uridine 5-monophosphate (from uridine 5-triphosphate), a reaction catalyzed by the N-terminal domain. This is Bifunctional protein GlmU from Methylibium petroleiphilum (strain ATCC BAA-1232 / LMG 22953 / PM1).